The following is a 588-amino-acid chain: Protein kintoun (588 aa).

Disordered regions lie at residues 199–223 (PGYE…PENS), 338–498 (PPLE…SSQE), and 510–535 (AANV…ADED). Over residues 202–212 (EAKEPPEERDL) the composition is skewed to basic and acidic residues. The span at 350-361 (PNPTSDPQNENQ) shows a compositional bias: polar residues. Composition is skewed to basic and acidic residues over residues 362–382 (TRVE…HQRG) and 393–433 (QVLE…KFEL). Residues 435–447 (DVQQENKGNCSNT) are compositionally biased toward polar residues. Positions 448–460 (KEVKCCRRTKDSL) are enriched in basic and acidic residues.

The protein belongs to the PIH1 family. Kintoun subfamily.

It is found in the cytoplasm. The protein localises to the dynein axonemal particle. Required for cytoplasmic pre-assembly of axonemal dyneins, thereby playing a central role in motility in cilia and flagella. Involved in pre-assembly of dynein arm complexes in the cytoplasm before intraflagellar transport loads them for the ciliary compartment. This chain is Protein kintoun, found in Oryzias latipes (Japanese rice fish).